We begin with the raw amino-acid sequence, 448 residues long: tRNA(Ile)-lysidine synthase (448 aa).

Position 25 to 30 (25 to 30) interacts with ATP; that stretch reads SGGSDS.

Belongs to the tRNA(Ile)-lysidine synthase family.

The protein resides in the cytoplasm. It carries out the reaction cytidine(34) in tRNA(Ile2) + L-lysine + ATP = lysidine(34) in tRNA(Ile2) + AMP + diphosphate + H(+). Ligates lysine onto the cytidine present at position 34 of the AUA codon-specific tRNA(Ile) that contains the anticodon CAU, in an ATP-dependent manner. Cytidine is converted to lysidine, thus changing the amino acid specificity of the tRNA from methionine to isoleucine. The sequence is that of tRNA(Ile)-lysidine synthase from Brucella suis biovar 1 (strain 1330).